Here is a 635-residue protein sequence, read N- to C-terminus: Glutamyl-tRNA(Gln) amidotransferase subunit E (635 aa).

The segment at Leu415–Asp437 is disordered.

It belongs to the GatB/GatE family. GatE subfamily. As to quaternary structure, heterodimer of GatD and GatE.

It catalyses the reaction L-glutamyl-tRNA(Gln) + L-glutamine + ATP + H2O = L-glutaminyl-tRNA(Gln) + L-glutamate + ADP + phosphate + H(+). Allows the formation of correctly charged Gln-tRNA(Gln) through the transamidation of misacylated Glu-tRNA(Gln) in organisms which lack glutaminyl-tRNA synthetase. The reaction takes place in the presence of glutamine and ATP through an activated gamma-phospho-Glu-tRNA(Gln). The GatDE system is specific for glutamate and does not act on aspartate. The protein is Glutamyl-tRNA(Gln) amidotransferase subunit E of Pyrococcus horikoshii (strain ATCC 700860 / DSM 12428 / JCM 9974 / NBRC 100139 / OT-3).